A 690-amino-acid chain; its full sequence is Sodium-dependent phosphate transport protein 2B (690 aa).

The interval 1–42 (MAPWPELGDAQPNPDKYLEGAAGQQPTAPDKSKETNKTDNTE) is disordered. Residues 1–100 (MAPWPELGDA…ILCFFQGIGR (100 aa)) are Cytoplasmic-facing. Residues 30–40 (DKSKETNKTDN) are compositionally biased toward basic and acidic residues. The chain crosses the membrane as a helical span at residues 101 to 121 (LILLLGFLYFFVCSLDILSSA). Topologically, residues 122–135 (FQLVGGKMAGQFFS) are extracellular. The helical transmembrane segment at 136-156 (NSSIMSNPLLGLVIGVLVTVL) threads the bilayer. Over 157–212 (VQSSSTSTSIVVSMVSSSLLTVRAAIPIIMGANIGTSITNTIVALMQVGDRSEFRR) the chain is Cytoplasmic. A helical transmembrane segment spans residues 213–233 (AFAGATVHDFFNWLSVLVLLP). The Extracellular portion of the chain corresponds to 234–362 (VEVATHYLEI…IFVNFHLPDL (129 aa)). N-linked (GlcNAc...) asparagine glycosylation is found at asparagine 295, asparagine 308, asparagine 313, asparagine 321, and asparagine 340. A disulfide bridge links cysteine 303 with cysteine 350. Residues 363-383 (AVGTILLILSLLVLCGCLIMI) form a helical membrane-spanning segment. Topologically, residues 384–407 (VKILGSVLKGQVATVIKKTINTDF) are cytoplasmic. A helical transmembrane segment spans residues 408–428 (PFPFAWLTGYLAILVGAGMTF). At 429–485 (IVQSSSVFTSALTPLIGIGVITIERAYPLTLGSNIGTTTTAILAALASPGNALRSSL) the chain is on the extracellular side. The helical transmembrane segment at 486-506 (QIALCHFFFNISGILLWYPIP) threads the bilayer. Residues 507 to 525 (FTRLPIRMAKGLGNISAKY) lie on the Cytoplasmic side of the membrane. The helical transmembrane segment at 526–546 (RWFAVFYLIIFFFLIPLTVFG) threads the bilayer. Residues 547 to 552 (LSLAGW) are Extracellular-facing. A helical membrane pass occupies residues 553–573 (RVLVGVGVPVVFIIILVLCLR). Topologically, residues 574 to 689 (LLQSRCPRVL…ASDSKTECTA (116 aa)) are cytoplasmic.

The protein belongs to the SLC34A transporter family. In terms of tissue distribution, highly expressed in lung. Also detected in pancreas, kidney, small intestine, ovary, testis, prostate and mammary gland. In lung, it is found in alveolar type II cells but not in bronchiolar epithelium.

Its subcellular location is the apical cell membrane. The catalysed reaction is 3 Na(+)(out) + phosphate(out) = 3 Na(+)(in) + phosphate(in). Its function is as follows. Involved in actively transporting phosphate into cells via Na(+) cotransport. The polypeptide is Sodium-dependent phosphate transport protein 2B (SLC34A2) (Homo sapiens (Human)).